Consider the following 66-residue polypeptide: MAKGKDVRIRVILECISCVRKGANEESTGISRYSTQKNRHNTPGQLEFKKFCRYCRKHTTHHEIKK.

This sequence belongs to the bacterial ribosomal protein bL33 family.

The protein localises to the plastid. It is found in the chloroplast. In Agrostis stolonifera (Creeping bentgrass), this protein is Large ribosomal subunit protein bL33c.